We begin with the raw amino-acid sequence, 273 residues long: HTH-type transcriptional activator RhaS (273 aa).

Residues 174-272 (YQLLDWLQNN…SQSPRDLRSQ (99 aa)) form the HTH araC/xylS-type domain. 2 DNA-binding regions (H-T-H motif) span residues 191-212 (PELA…KNKT) and 239-262 (VTDI…KREF).

In terms of assembly, binds DNA as a dimer.

It is found in the cytoplasm. Functionally, activates expression of the rhaBAD and rhaT operons. The protein is HTH-type transcriptional activator RhaS of Yersinia pseudotuberculosis serotype O:1b (strain IP 31758).